Here is a 311-residue protein sequence, read N- to C-terminus: Ribosomal RNA small subunit methyltransferase H (311 aa).

Residues 41–43, Asp61, Phe85, Asp102, and Gln109 contribute to the S-adenosyl-L-methionine site; that span reads GGH.

This sequence belongs to the methyltransferase superfamily. RsmH family.

The protein resides in the cytoplasm. It carries out the reaction cytidine(1402) in 16S rRNA + S-adenosyl-L-methionine = N(4)-methylcytidine(1402) in 16S rRNA + S-adenosyl-L-homocysteine + H(+). Specifically methylates the N4 position of cytidine in position 1402 (C1402) of 16S rRNA. The chain is Ribosomal RNA small subunit methyltransferase H from Paracidovorax citrulli (strain AAC00-1) (Acidovorax citrulli).